Consider the following 330-residue polypeptide: Olfactory receptor 5T9 (330 aa).

At 1-37 (MSIHSPGYTVRRIPVNNVTDTTMFILTGFTDDADLQV) the chain is on the extracellular side. N-linked (GlcNAc...) asparagine glycosylation is present at Asn-17. The helical transmembrane segment at 38–58 (LLFLLFFVIYLFTLIGNLGLV) threads the bilayer. Residues 59-66 (LLVIGDSR) are Cytoplasmic-facing. A helical transmembrane segment spans residues 67 to 87 (LHNPMYYFLSVLSFLDACYST). Residues 88–111 (VVTPKMLVNFISNDKSISYPGCVT) are Extracellular-facing. The cysteines at positions 109 and 201 are disulfide-linked. A helical membrane pass occupies residues 112 to 132 (EMFLFVTFGTTECFLLAAMAY). At 133-145 (DRFVAIYNPLLYA) the chain is on the cytoplasmic side. A helical transmembrane segment spans residues 146–166 (VKMSPRVYIPLIIACYSGGIM). Residues 167 to 208 (HATIHTVATFSLSFCASNEIRHVFCDIPPLLAISCSNTNINQ) lie on the Extracellular side of the membrane. A helical membrane pass occupies residues 209–229 (LLLFYCVGSIEIITILIVLVS). Residues 230–249 (YSFILFAILKMNSAEGRRKI) lie on the Cytoplasmic side of the membrane. Residues 250-270 (FSTCGSHLTGVSIYHGTILFM) traverse the membrane as a helical segment. Topologically, residues 271–283 (YVRPSSNYALEHD) are extracellular. A helical membrane pass occupies residues 284–304 (MIVSTFYTIVIPMLNPIIYSL). At 305–330 (RNKDVKEAMKKIFERNFFMNKVHFKL) the chain is on the cytoplasmic side.

It belongs to the G-protein coupled receptor 1 family.

Its subcellular location is the cell membrane. Potential odorant receptor. The protein is Olfactory receptor 5T9 of Mus musculus (Mouse).